The primary structure comprises 1389 residues: DNA-directed RNA polymerase subunit beta'' (1389 aa).

Zn(2+)-binding residues include C220, C290, C297, and C300.

It belongs to the RNA polymerase beta' chain family. RpoC2 subfamily. As to quaternary structure, in plastids the minimal PEP RNA polymerase catalytic core is composed of four subunits: alpha, beta, beta', and beta''. When a (nuclear-encoded) sigma factor is associated with the core the holoenzyme is formed, which can initiate transcription. Zn(2+) is required as a cofactor.

It localises to the plastid. The protein resides in the chloroplast. The enzyme catalyses RNA(n) + a ribonucleoside 5'-triphosphate = RNA(n+1) + diphosphate. DNA-dependent RNA polymerase catalyzes the transcription of DNA into RNA using the four ribonucleoside triphosphates as substrates. The chain is DNA-directed RNA polymerase subunit beta'' from Chloranthus spicatus (Chulantree).